We begin with the raw amino-acid sequence, 1194 residues long: Cohesin subunit SA-2 (1194 aa).

The SCD domain occupies 224 to 309 (FVHRYRDAIA…SRFKDRIVSM (86 aa)). The disordered stretch occupies residues 986 to 1027 (DTMSVMSGMSGRGSSTRSKKIKPPTGKRKLPEAEESSSSDSM). The span at 988 to 1001 (MSVMSGMSGRGSST) shows a compositional bias: low complexity. Residues 1002–1013 (RSKKIKPPTGKR) are compositionally biased toward basic residues.

Belongs to the SCC3 family. As to quaternary structure, part of the cohesin complex which is composed of a heterodimer between a SMC1 protein (SMC1A or SMC1B) and SMC3, which are attached via their hinge domain, and RAD21 which link them at their heads, and one STAG protein (STAG1, STAG2 or STAG3). In cohesin complexes, STAG2 is mutually exclusive with STAG1 and STAG3. Interacts directly with RAD21 in cohesin complex. Phosphorylated by PLK1. The large dissociation of cohesin from chromosome arms during prophase is partly due to its phosphorylation.

It localises to the nucleus. The protein localises to the chromosome. Its subcellular location is the centromere. Component of cohesin complex, a complex required for the cohesion of sister chromatids after DNA replication. The cohesin complex apparently forms a large proteinaceous ring within which sister chromatids can be trapped. At anaphase, the complex is cleaved and dissociates from chromatin, allowing sister chromatids to segregate. The cohesin complex may also play a role in spindle pole assembly during mitosis. The protein is Cohesin subunit SA-2 (stag2) of Xenopus laevis (African clawed frog).